The primary structure comprises 329 residues: T-cell acute lymphocytic leukemia protein 1 homolog (329 aa).

Disordered stretches follow at residues 1-28 (MTER…RMAP), 40-78 (ETSR…KGRD), and 91-125 (TELC…SPPA). Ser-12 bears the Phosphoserine mark. A compositionally biased stretch (gly residues) spans 58 to 70 (SGAGGGPASGGGA). Residues 96 to 106 (PPGPAPAPAPA) show a composition bias toward pro residues. Ser-122 is subject to Phosphoserine; by MAPK. Phosphoserine is present on Ser-172. Positions 187 to 239 (VRRIFTNSRERWRQQNVNGAFAELRKLIPTHPPDKKLSKNEILRLAMKYINFL) constitute a bHLH domain. The segment at 247–329 (EEEGTQRAKP…LPAADGAGPR (83 aa)) is disordered. Over residues 263-273 (GAGGGGAGGGI) the composition is skewed to gly residues. A compositionally biased stretch (low complexity) spans 317–329 (PALLPAADGAGPR).

Efficient DNA binding requires dimerization with another bHLH protein. Forms heterodimers with TCF3. Binds to the LIM domain containing protein LMO2 and to DRG1. Can assemble in a complex with LDB1 and LMO2. Component of a TAL-1 complex composed at least of CBFA2T3, LDB1, TAL1 and TCF3. Interacts with SBNO2; this interaction inhibits TAL1 occupancy of the DCSTAMP promoter, leading to the activation of the DCSTAMP promoter by the transcription factor MITF. Post-translationally, phosphorylated on serine residues. Phosphorylation of Ser-122 by MAPK is strongly stimulated by hypoxia. In terms of processing, ubiquitinated; subsequent to hypoxia-dependent phosphorylation of Ser-122, ubiquitination targets the protein for rapid degradation via the ubiquitin system. This process may be characteristic for microvascular endothelial cells, since it could not be observed in large vessel endothelial cells. As to expression, erythroid and myeloid cells.

The protein resides in the nucleus. In terms of biological role, implicated in the genesis of hemopoietic malignancies. It may play an important role in hemopoietic differentiation. Serves as a positive regulator of erythroid differentiation. The chain is T-cell acute lymphocytic leukemia protein 1 homolog (Tal1) from Mus musculus (Mouse).